Reading from the N-terminus, the 86-residue chain is Exodeoxyribonuclease 7 small subunit (86 aa).

A disordered region spans residues 1–26; the sequence is MQDELFETEKAPQKNTKNAKNAPKKS.

The protein belongs to the XseB family. As to quaternary structure, heterooligomer composed of large and small subunits.

The protein resides in the cytoplasm. It carries out the reaction Exonucleolytic cleavage in either 5'- to 3'- or 3'- to 5'-direction to yield nucleoside 5'-phosphates.. Bidirectionally degrades single-stranded DNA into large acid-insoluble oligonucleotides, which are then degraded further into small acid-soluble oligonucleotides. In Helicobacter pylori (strain HPAG1), this protein is Exodeoxyribonuclease 7 small subunit.